The primary structure comprises 86 residues: Large ribosomal subunit protein uL23 (86 aa).

The protein belongs to the universal ribosomal protein uL23 family. Part of the 50S ribosomal subunit. Contacts protein L29.

Binds to 23S rRNA. One of the proteins that surrounds the polypeptide exit tunnel on the outside of the ribosome. The protein is Large ribosomal subunit protein uL23 of Pyrococcus furiosus (strain ATCC 43587 / DSM 3638 / JCM 8422 / Vc1).